Consider the following 197-residue polypeptide: Probable nicotinate-nucleotide adenylyltransferase (197 aa).

It belongs to the NadD family.

It carries out the reaction nicotinate beta-D-ribonucleotide + ATP + H(+) = deamido-NAD(+) + diphosphate. It participates in cofactor biosynthesis; NAD(+) biosynthesis; deamido-NAD(+) from nicotinate D-ribonucleotide: step 1/1. Its function is as follows. Catalyzes the reversible adenylation of nicotinate mononucleotide (NaMN) to nicotinic acid adenine dinucleotide (NaAD). The polypeptide is Probable nicotinate-nucleotide adenylyltransferase (Bordetella pertussis (strain Tohama I / ATCC BAA-589 / NCTC 13251)).